The primary structure comprises 397 residues: Lysophospholipid transporter LplT (397 aa).

Topologically, residues 1-17 (MSESVHTNTSLWSKGMK) are periplasmic. Residues 18–38 (AVIVAQFLSAFGDNALLFATL) traverse the membrane as a helical segment. Residues 39 to 52 (ALLKAQFYPEWSQP) lie on the Cytoplasmic side of the membrane. The helical transmembrane segment at 53–73 (ILQMVFVGAYILFAPFVGQVA) threads the bilayer. Residues 74–90 (DSFAKGRVMMFANGLKL) are Periplasmic-facing. Residues 91–111 (LGAASICFGINPFLGYTLVGV) form a helical membrane-spanning segment. At 112–144 (GAAAYSPAKYGILGELTTGSKLVKANGLMEAST) the chain is on the cytoplasmic side. Residues 145–165 (IAAILLGSVAGGVLADWHVLV) form a helical membrane-spanning segment. Position 166 (Ala-166) is a topological domain, periplasmic. The chain crosses the membrane as a helical span at residues 167-187 (LAACALAYGGAVVANIYIPKL). Over 188 to 226 (AAARPGQSWNLINMTRSFLNACTSLWCNGETRFSLVGTS) the chain is Cytoplasmic. Residues 227–247 (LFWGAGVTLRFLLVLWVPVAL) form a helical membrane-spanning segment. Residues 248–256 (GITDNATPT) are Periplasmic-facing. The chain crosses the membrane as a helical span at residues 257–277 (YLNAMVAIGIVVGAGAAAKLV). The Cytoplasmic segment spans residues 278–280 (TLE). The helical transmembrane segment at 281–301 (TVSRCMPAGILIGVVVLIFSL) threads the bilayer. The Periplasmic segment spans residues 302-304 (QHE). Residues 305-325 (LLPAYALLMLIGVLGGFFVVP) traverse the membrane as a helical segment. Residues 326 to 343 (LNALLQERGKKSVGAGNA) are Cytoplasmic-facing. A helical membrane pass occupies residues 344 to 364 (IAVQNLGENSAMLLMLGIYSL). The Periplasmic portion of the chain corresponds to 365-366 (AV). The helical transmembrane segment at 367 to 387 (MVGIPVVPIGIGFGALFALAI) threads the bilayer. At 388–397 (TALWIWQRRH) the chain is on the cytoplasmic side.

Belongs to the major facilitator superfamily. LplT (TC 2.A.1.42) family.

It localises to the cell inner membrane. In terms of biological role, catalyzes the facilitated diffusion of 2-acyl-glycero-3-phosphoethanolamine (2-acyl-GPE) into the cell. This is Lysophospholipid transporter LplT from Shigella dysenteriae serotype 1 (strain Sd197).